Consider the following 220-residue polypeptide: Chalcone--flavanone isomerase B (220 aa).

Residues threonine 50, asparagine 115, and threonine 192 each contribute to the substrate site.

Belongs to the chalcone isomerase family.

It catalyses the reaction a chalcone = a flavanone.. It functions in the pathway secondary metabolite biosynthesis; flavonoid biosynthesis. Functionally, catalyzes the intramolecular cyclization of bicyclic chalcones into tricyclic (S)-flavanones. Responsible for the isomerization of 4,2',4',6'-tetrahydroxychalcone (also termed chalcone) into naringenin. The protein is Chalcone--flavanone isomerase B (CHI2) of Petunia hybrida (Petunia).